Consider the following 155-residue polypeptide: MSQVILDLQLACENHSGLPDEAQFQRWLDGVIPQFQEASEVTIRLVDEAESHDLNLTYRGKDKPTNVLSFPFEAPPGIEMPLLGDLIICRQVVEQEAQEQDKPLEAHWAHMVVHGSLHLLGYDHIDDDEAEEMESLETEIMLAMGYEDPYIAEKE.

Positions 114, 118, and 124 each coordinate Zn(2+).

It belongs to the endoribonuclease YbeY family. Zn(2+) serves as cofactor.

Its subcellular location is the cytoplasm. Functionally, single strand-specific metallo-endoribonuclease involved in late-stage 70S ribosome quality control and in maturation of the 3' terminus of the 16S rRNA. This is Endoribonuclease YbeY from Salmonella arizonae (strain ATCC BAA-731 / CDC346-86 / RSK2980).